An 81-amino-acid polypeptide reads, in one-letter code: Putative membrane protein insertion efficiency factor (81 aa).

The segment at 60–81 (WNPGGYDPVPTHNTSNSSPMAE) is disordered. Residues 70–81 (THNTSNSSPMAE) are compositionally biased toward polar residues.

The protein belongs to the UPF0161 family.

It is found in the cell inner membrane. Its function is as follows. Could be involved in insertion of integral membrane proteins into the membrane. The polypeptide is Putative membrane protein insertion efficiency factor (Stutzerimonas stutzeri (strain A1501) (Pseudomonas stutzeri)).